The chain runs to 371 residues: MGTTEATLRMENVDVKEEWQDEDLPRPLPEETGVELLGSPVEDTSSPPNTLNFNGAHRKRKTLVAPDINISLDQSEGSLLSDDFLDTPDDLDINVDDIETPDETDSLEFLGNGNELEWGDDTPVATAKNMPGDSADLFGDGTTEDGGAANGRLWRTVIIGEQEHRIDLHMIRPYMKVVTHGGYYGEGLNAIIVFAACFLPDSSLPDYHYIMENLFLYVISSLELLVAEDYMIVYLNGATPRRRMPGIGWLKKCYQMIDRRLRKNLKSLIIVHPSWFIRTVLAISRPFISVKFINKIQYVHSLEDLEQLIPMEHVQIPDCVLQYEEERLKARRESARPQPEFVMPRSEEKPEVAPVENRSAPVTEDQETSMS.

The interval 1 to 54 (MGTTEATLRMENVDVKEEWQDEDLPRPLPEETGVELLGSPVEDTSSPPNTLNFN) is disordered. Over residues 11–29 (ENVDVKEEWQDEDLPRPLP) the composition is skewed to basic and acidic residues. The segment covering 42–53 (EDTSSPPNTLNF) has biased composition (polar residues). Positions 115–120 (ELEWGD) are required for interaction with KLC1. Residues 171–328 (IRPYMKVVTH…CVLQYEEERL (158 aa)) enclose the CRAL-TRIO domain. Residues 190–371 (AIIVFAACFL…VTEDQETSMS (182 aa)) are mediates interaction with GLS. Positions 331 to 371 (RRESARPQPEFVMPRSEEKPEVAPVENRSAPVTEDQETSMS) are disordered.

As to quaternary structure, interacts with KLC1; may link mitochondria to KLC1 and regulate mitochondria localization into neuron projections. Interacts with GLS; the interaction is direct and may control GLS localization, negatively regulating its activity. Interacts with PIN1 (via WW domain); upon NGF stimulation. The interaction with PIN1 and GLS is competitive. Post-translationally, cleaved by CASP3 and CASP7. The potential C-terminal product released by CASP3 cleavage may inhibit the ERK signaling pathway through MAP2K2. May be ubiquitinated by STUB1.

The protein localises to the cell projection. It localises to the axon. It is found in the dendrite. Its subcellular location is the presynapse. The protein resides in the mitochondrion. The protein localises to the growth cone. It localises to the cytoplasm. Its function is as follows. Functions in the development of neural tissues, particularly the postnatal maturation of the cerebellar cortex. May play a role in neurotransmission through regulation of glutaminase/GLS, an enzyme responsible for the production in neurons of the glutamate neurotransmitter. Alternatively, may regulate the localization of mitochondria within axons and dendrites. The sequence is that of Caytaxin (ATCAY) from Macaca fascicularis (Crab-eating macaque).